We begin with the raw amino-acid sequence, 303 residues long: N-acetyl-D-glucosamine kinase (303 aa).

Residues G4–K11 and G133–F140 each bind ATP. H157, C177, C179, and C184 together coordinate Zn(2+).

This sequence belongs to the ROK (NagC/XylR) family. NagK subfamily.

It carries out the reaction N-acetyl-D-glucosamine + ATP = N-acetyl-D-glucosamine 6-phosphate + ADP + H(+). It functions in the pathway cell wall biogenesis; peptidoglycan recycling. Its function is as follows. Catalyzes the phosphorylation of N-acetyl-D-glucosamine (GlcNAc) derived from cell-wall degradation, yielding GlcNAc-6-P. In Escherichia coli O139:H28 (strain E24377A / ETEC), this protein is N-acetyl-D-glucosamine kinase.